The primary structure comprises 115 residues: Transcriptional regulator protein FixT (115 aa).

As to quaternary structure, interacts directly with FixL.

Its function is as follows. Prevents transcription of the intermediate key regulatory genes nifA and fixK by counteracting the activity of the FixLJ two-component system. Acts as an inhibitor of the sensor hemoprotein kinase fixL, preventing the production or the accumulation of its phosphorylated form. The protein is Transcriptional regulator protein FixT (fixT) of Rhizobium meliloti (strain 1021) (Ensifer meliloti).